The chain runs to 158 residues: NAD(P)H-quinone oxidoreductase subunit N (158 aa).

Belongs to the complex I NdhN subunit family. NDH-1 can be composed of about 15 different subunits; different subcomplexes with different compositions have been identified which probably have different functions.

The protein resides in the cellular thylakoid membrane. It catalyses the reaction a plastoquinone + NADH + (n+1) H(+)(in) = a plastoquinol + NAD(+) + n H(+)(out). It carries out the reaction a plastoquinone + NADPH + (n+1) H(+)(in) = a plastoquinol + NADP(+) + n H(+)(out). Its function is as follows. NDH-1 shuttles electrons from an unknown electron donor, via FMN and iron-sulfur (Fe-S) centers, to quinones in the respiratory and/or the photosynthetic chain. The immediate electron acceptor for the enzyme in this species is believed to be plastoquinone. Couples the redox reaction to proton translocation, and thus conserves the redox energy in a proton gradient. Cyanobacterial NDH-1 also plays a role in inorganic carbon-concentration. The protein is NAD(P)H-quinone oxidoreductase subunit N of Prochlorococcus marinus (strain MIT 9215).